Reading from the N-terminus, the 36-residue chain is GLFIIDDKQITMNDLPVGRSVDETLRLVQAFQYTDK.

Belongs to the peroxiredoxin family. AhpC/Prx1 subfamily. Homodimer; disulfide-linked, upon oxidation. In terms of tissue distribution, venom gland.

The protein localises to the secreted. It carries out the reaction a hydroperoxide + [thioredoxin]-dithiol = an alcohol + [thioredoxin]-disulfide + H2O. Functionally, venom peroxiredoxin enzyme that may play a role as part of a redox pathway leading to the structural/functional diversification of toxins through a disulfide bond engineering mechanism. The polypeptide is Peroxiredoxin-4 (Crotalus atrox (Western diamondback rattlesnake)).